Here is a 280-residue protein sequence, read N- to C-terminus: uncharacterized protein (280 aa).

Lysine 3 to valine 29 is a binding site for NADP(+). Serine 139 contributes to the substrate binding site. Tyrosine 152 acts as the Proton acceptor in catalysis.

It belongs to the short-chain dehydrogenases/reductases (SDR) family.

This is an uncharacterized protein from Bacillus subtilis (strain 168).